We begin with the raw amino-acid sequence, 360 residues long: 3-dehydroquinate synthase (360 aa).

NAD(+)-binding positions include 71 to 76, 105 to 109, 129 to 130, lysine 142, lysine 151, and 169 to 172; these read DGEQFK, GVIGD, TT, and FLKT. Zn(2+) is bound by residues glutamate 184, histidine 247, and histidine 264.

The protein belongs to the sugar phosphate cyclases superfamily. Dehydroquinate synthase family. NAD(+) serves as cofactor. The cofactor is Co(2+). It depends on Zn(2+) as a cofactor.

It is found in the cytoplasm. It catalyses the reaction 7-phospho-2-dehydro-3-deoxy-D-arabino-heptonate = 3-dehydroquinate + phosphate. Its pathway is metabolic intermediate biosynthesis; chorismate biosynthesis; chorismate from D-erythrose 4-phosphate and phosphoenolpyruvate: step 2/7. Catalyzes the conversion of 3-deoxy-D-arabino-heptulosonate 7-phosphate (DAHP) to dehydroquinate (DHQ). The polypeptide is 3-dehydroquinate synthase (Buchnera aphidicola subsp. Schizaphis graminum (strain Sg)).